The sequence spans 450 residues: Cysteine proteinase (450 aa).

Residues 1 to 20 (MPRTEMVRFVRLPVVLLAMA) form the signal peptide. A propeptide spans 21 to 125 (ACLASVALGS…RKTVNVTTGR (105 aa)) (activation peptide). Asn-120 carries an N-linked (GlcNAc...) asparagine glycan. Residues Cys-147 and Cys-188 are joined by a disulfide bond. Active-site residues include Cys-150, His-287, and Asn-307. Positions 343–450 (TPPPPPPPPP…TKAARLVPHQ (108 aa)) are 108-residue extension. The N-linked (GlcNAc...) asparagine glycan is linked to Asn-397.

Belongs to the peptidase C1 family.

It localises to the lysosome. Its function is as follows. The cysteine proteinases have a potential role in host-parasite interaction and virulence. This is Cysteine proteinase from Trypanosoma brucei brucei.